Here is a 241-residue protein sequence, read N- to C-terminus: Guanosine phosphorylase (241 aa).

Belongs to the PNP/UDP phosphorylase family.

It carries out the reaction guanosine + phosphate = alpha-D-ribose 1-phosphate + guanine. The enzyme catalyses a purine D-ribonucleoside + phosphate = a purine nucleobase + alpha-D-ribose 1-phosphate. The catalysed reaction is inosine + phosphate = alpha-D-ribose 1-phosphate + hypoxanthine. It catalyses the reaction adenosine + phosphate = alpha-D-ribose 1-phosphate + adenine. With respect to regulation, activity is higher at low KCl concentrations. In terms of biological role, phosphorylase involved in the non-carboxylating pentose bisphosphate pathway, a nucleoside degradation pathway present in some halophilic archaea. Catalyzes the phosphorolytic cleavage of guanosine to guanine and ribose-1-phosphate (R1P). Exhibits the highest activity toward guanosine, but also shows lower activity against inosine and adenosine. The chain is Guanosine phosphorylase from Halorubrum lacusprofundi (strain ATCC 49239 / DSM 5036 / JCM 8891 / ACAM 34).